A 329-amino-acid polypeptide reads, in one-letter code: Coiled-coil domain-containing protein 54 (329 aa).

A coiled-coil region spans residues 86–149 (NIVSSISNIQ…VTELESQNSY (64 aa)). Residues 178 to 191 (TPKGTATSPDTVIS) show a composition bias toward polar residues. The disordered stretch occupies residues 178 to 214 (TPKGTATSPDTVISSAEPERVSSYPEPTGELKKKTTS). Thr-182 bears the Phosphothreonine mark.

The sequence is that of Coiled-coil domain-containing protein 54 (Ccdc54) from Mus musculus (Mouse).